The following is a 247-amino-acid chain: ATP synthase subunit a, chloroplastic (247 aa).

A run of 5 helical transmembrane segments spans residues 38–58 (QVLITSWVVIAILLGSVIIAV), 95–115 (VPFIGTMFLFIFVSNWSGALL), 133–153 (DINTTVALALPTSVAYFYAGL), 199–219 (LVVVVLVSLVPSVVPIPVMFL), and 220–240 (GLFTSGIQALIFATLAAAYIG).

Belongs to the ATPase A chain family. F-type ATPases have 2 components, CF(1) - the catalytic core - and CF(0) - the membrane proton channel. CF(1) has five subunits: alpha(3), beta(3), gamma(1), delta(1), epsilon(1). CF(0) has four main subunits: a, b, b' and c.

The protein localises to the plastid. It localises to the chloroplast thylakoid membrane. Its function is as follows. Key component of the proton channel; it plays a direct role in the translocation of protons across the membrane. This is ATP synthase subunit a, chloroplastic from Phalaenopsis aphrodite subsp. formosana (Moth orchid).